Consider the following 89-residue polypeptide: Small ribosomal subunit protein uS15 (89 aa).

Positions 1-11 (MSITAERKAEV) are enriched in basic and acidic residues. The disordered stretch occupies residues 1-24 (MSITAERKAEVIKTNAKKAGDTGS).

The protein belongs to the universal ribosomal protein uS15 family. Part of the 30S ribosomal subunit. Forms a bridge to the 50S subunit in the 70S ribosome, contacting the 23S rRNA.

Functionally, one of the primary rRNA binding proteins, it binds directly to 16S rRNA where it helps nucleate assembly of the platform of the 30S subunit by binding and bridging several RNA helices of the 16S rRNA. In terms of biological role, forms an intersubunit bridge (bridge B4) with the 23S rRNA of the 50S subunit in the ribosome. The protein is Small ribosomal subunit protein uS15 of Afipia carboxidovorans (strain ATCC 49405 / DSM 1227 / KCTC 32145 / OM5) (Oligotropha carboxidovorans).